The sequence spans 124 residues: uncharacterized protein (124 aa).

The chain crosses the membrane as a helical span at residues 70–90 (LLYLALVLLLVVILSTAFFSI).

The protein localises to the membrane. This is an uncharacterized protein from Saccharomyces cerevisiae (strain ATCC 204508 / S288c) (Baker's yeast).